Here is a 133-residue protein sequence, read N- to C-terminus: Large ribosomal subunit protein eL14 (133 aa).

The protein belongs to the eukaryotic ribosomal protein eL14 family.

The sequence is that of Large ribosomal subunit protein eL14 (RPL14) from Griffithsia japonica (Red alga).